A 495-amino-acid polypeptide reads, in one-letter code: Internal alternative NAD(P)H-ubiquinone oxidoreductase A1, mitochondrial (495 aa).

A mitochondrion-targeting transit peptide spans 1 to 41 (MPWFKNLIKISKTITNQSSSYKSITPLASPLLAQFLQFTKQ). 61 to 91 (RIVVLGSGWAGCRLMKDIDTNIYDVVCVSPR) lines the FAD pocket. 228–264 (LHCVVVGGGPTGVEFSGELSDFILKDVHQRYAHVKDY) lines the NAD(+) pocket. A Microbody targeting signal motif is present at residues 486 to 495 (LVFGRDISRI).

It belongs to the NADH dehydrogenase family. The cofactor is FAD.

The protein localises to the mitochondrion inner membrane. It is found in the peroxisome. The enzyme catalyses a quinone + NADH + H(+) = a quinol + NAD(+). It carries out the reaction a ubiquinone + NADH + H(+) = a ubiquinol + NAD(+). Its function is as follows. Alternative NADH-ubiquinone oxidoreductase which catalyzes the oxidation of mitochondrial NADH does not translocate protons across the inner mitochondrial membrane. This Solanum tuberosum (Potato) protein is Internal alternative NAD(P)H-ubiquinone oxidoreductase A1, mitochondrial (NDA1).